The following is a 1575-amino-acid chain: Ovochymase (1575 aa).

The signal sequence occupies residues 1 to 19 (MIVTFVALALSCCTPQVTA). The Peptidase S1 1 domain maps to 36–280 (IVGGEMAKLG…YSSWIANYTQ (245 aa)). C61 and C77 form a disulfide bridge. Catalysis depends on charge relay system residues H76 and D132. 3 disulfide bridges follow: C166–C233, C199–C212, and C223–C256. Residue S227 is the Charge relay system of the active site. N-linked (GlcNAc...) asparagine glycosylation is found at N277 and N303. Cystine bridges form between C300–C330, C358–C386, C432–C460, and C486–C507. CUB domains are found at residues 300-423 (CSSN…FHAV) and 432-545 (CGGI…YYFS). Residues N497, N513, and N549 are each glycosylated (N-linked (GlcNAc...) asparagine). The Peptidase S1 2 domain occupies 575–810 (IVNGDIAIAG…YIDWIIATAN (236 aa)). C602 and C618 are oxidised to a cystine. Catalysis depends on charge relay system residues H617 and D665. 3 disulfides stabilise this stretch: C700-C766, C730-C745, and C756-C786. N-linked (GlcNAc...) asparagine glycosylation is present at N748. The active-site Charge relay system is the S760. An N-linked (GlcNAc...) asparagine glycan is attached at N810. 7 disulfide bridges follow: C830–C859, C889–C913, C956–C984, C1012–C1034, C1080–C1108, C1135–C1158, and C1221–C1246. CUB domains are found at residues 830–949 (CIQL…YRLE), 956–1070 (CGQL…FVEL), 1080–1197 (CGGV…YTAV), and 1221–1341 (CQDS…YKLM). N968, N1027, N1087, and N1090 each carry an N-linked (GlcNAc...) asparagine glycan. The N-linked (GlcNAc...) asparagine glycan is linked to N1273. A Peptidase S1 3 domain is found at 1314–1575 (YNGGEISMLF…FLKWITKIIQ (262 aa)). Cystine bridges form between C1376/C1392 and C1493/C1507. A glycan (N-linked (GlcNAc...) asparagine) is linked at N1511.

It belongs to the peptidase S1 family. In terms of tissue distribution, expressed in the testis and ovary. Expressed in the gonads and gametes. Expressed in the follicle cells covering the vitelline coat of ovarian egg.

Its subcellular location is the secreted. In terms of biological role, may be responsible for elevation of the vitelline coat at the late developmental stage of oogenesis and during fertilization in ovarian eggs. In Halocynthia roretzi (Sea squirt), this protein is Ovochymase.